The chain runs to 206 residues: Protein VEL1 (206 aa).

An N-terminal signal peptide occupies residues 1–19; it reads MSFLSIFTFFSVLISVATT. 5 N-linked (GlcNAc...) asparagine glycosylation sites follow: Asn26, Asn48, Asn91, Asn139, and Asn152.

This sequence belongs to the VEL1 family. Post-translationally, N-glycosylated.

Its subcellular location is the cytoplasm. It localises to the cytosol. In Saccharomyces cerevisiae (strain ATCC 204508 / S288c) (Baker's yeast), this protein is Protein VEL1 (VEL1).